The primary structure comprises 119 residues: Holo-[acyl-carrier-protein] synthase (119 aa).

The Mg(2+) site is built by D8 and E59.

It belongs to the P-Pant transferase superfamily. AcpS family. Requires Mg(2+) as cofactor.

The protein localises to the cytoplasm. The enzyme catalyses apo-[ACP] + CoA = holo-[ACP] + adenosine 3',5'-bisphosphate + H(+). Its function is as follows. Transfers the 4'-phosphopantetheine moiety from coenzyme A to a Ser of acyl-carrier-protein. This Lactococcus lactis subsp. lactis (strain IL1403) (Streptococcus lactis) protein is Holo-[acyl-carrier-protein] synthase.